The chain runs to 119 residues: Ribonuclease P protein component (119 aa).

The protein belongs to the RnpA family. In terms of assembly, consists of a catalytic RNA component (M1 or rnpB) and a protein subunit.

It catalyses the reaction Endonucleolytic cleavage of RNA, removing 5'-extranucleotides from tRNA precursor.. Functionally, RNaseP catalyzes the removal of the 5'-leader sequence from pre-tRNA to produce the mature 5'-terminus. It can also cleave other RNA substrates such as 4.5S RNA. The protein component plays an auxiliary but essential role in vivo by binding to the 5'-leader sequence and broadening the substrate specificity of the ribozyme. In Corynebacterium diphtheriae (strain ATCC 700971 / NCTC 13129 / Biotype gravis), this protein is Ribonuclease P protein component.